A 240-amino-acid chain; its full sequence is Ribosomal RNA small subunit methyltransferase G (240 aa).

S-adenosyl-L-methionine-binding positions include glycine 80, phenylalanine 85, 103–105 (DSS), 131–132 (AE), and arginine 150.

Belongs to the methyltransferase superfamily. RNA methyltransferase RsmG family.

The protein localises to the cytoplasm. Functionally, specifically methylates the N7 position of a guanine in 16S rRNA. This is Ribosomal RNA small subunit methyltransferase G from Thermoanaerobacter sp. (strain X514).